A 307-amino-acid chain; its full sequence is 4-hydroxy-tetrahydrodipicolinate synthase (307 aa).

Thr-57 provides a ligand contact to pyruvate. Tyr-145 acts as the Proton donor/acceptor in catalysis. Residue Lys-173 is the Schiff-base intermediate with substrate of the active site. Val-215 contacts pyruvate.

It belongs to the DapA family. In terms of assembly, homotetramer; dimer of dimers.

The protein resides in the cytoplasm. The enzyme catalyses L-aspartate 4-semialdehyde + pyruvate = (2S,4S)-4-hydroxy-2,3,4,5-tetrahydrodipicolinate + H2O + H(+). It participates in amino-acid biosynthesis; L-lysine biosynthesis via DAP pathway; (S)-tetrahydrodipicolinate from L-aspartate: step 3/4. Functionally, catalyzes the condensation of (S)-aspartate-beta-semialdehyde [(S)-ASA] and pyruvate to 4-hydroxy-tetrahydrodipicolinate (HTPA). This Leptospira interrogans serogroup Icterohaemorrhagiae serovar copenhageni (strain Fiocruz L1-130) protein is 4-hydroxy-tetrahydrodipicolinate synthase.